Reading from the N-terminus, the 513-residue chain is Probable helicase MJ1565 (513 aa).

ATP-binding positions include arginine 151, 160-165 (GMGKSN), and 467-468 (KV).

The protein belongs to the HerA family.

The catalysed reaction is Couples ATP hydrolysis with the unwinding of duplex DNA at the replication fork by translocating in the 5'-3' direction. This creates two antiparallel DNA single strands (ssDNA). The leading ssDNA polymer is the template for DNA polymerase III holoenzyme which synthesizes a continuous strand.. The enzyme catalyses ATP + H2O = ADP + phosphate + H(+). It carries out the reaction Couples ATP hydrolysis with the unwinding of duplex DNA by translocating in the 3'-5' direction.. A probably bidirectional DNA helicase. This is Probable helicase MJ1565 from Methanocaldococcus jannaschii (strain ATCC 43067 / DSM 2661 / JAL-1 / JCM 10045 / NBRC 100440) (Methanococcus jannaschii).